We begin with the raw amino-acid sequence, 160 residues long: Cytochrome b6-f complex subunit 4 (160 aa).

3 helical membrane-spanning segments follow: residues 36 to 56 (LLYI…GLGV), 95 to 115 (LLGV…PFIE), and 131 to 151 (LVFL…TMPI).

This sequence belongs to the cytochrome b family. PetD subfamily. In terms of assembly, the 4 large subunits of the cytochrome b6-f complex are cytochrome b6, subunit IV (17 kDa polypeptide, petD), cytochrome f and the Rieske protein, while the 4 small subunits are petG, petL, petM and petN. The complex functions as a dimer.

It localises to the plastid. It is found in the chloroplast thylakoid membrane. Its function is as follows. Component of the cytochrome b6-f complex, which mediates electron transfer between photosystem II (PSII) and photosystem I (PSI), cyclic electron flow around PSI, and state transitions. The sequence is that of Cytochrome b6-f complex subunit 4 from Emiliania huxleyi (Coccolithophore).